A 151-amino-acid polypeptide reads, in one-letter code: Large ribosomal subunit protein bL9 (151 aa).

The protein belongs to the bacterial ribosomal protein bL9 family.

Binds to the 23S rRNA. The sequence is that of Large ribosomal subunit protein bL9 from Chlorobium chlorochromatii (strain CaD3).